We begin with the raw amino-acid sequence, 215 residues long: MGERQTIADSKRAFHQAFPHVIAPLYRRLADELLVELHLLSHQSSFKTTPLFAVGLCTVFDTFSAGYRPEEHITGLLDALCSSNGYDANTFRKESKRCIDAAKTESVDAMDSHLAGQKLGEGSHYSRLMAIGVLRLFEEAKGDADQPDEADLRKRCKELSTALNFPAERVEKDLSLFASNSERMSAAIELVQETIAAERRKKERRQAEQAQRSES.

Residues 188–209 (IELVQETIAAERRKKERRQAEQ) are a coiled coil.

This sequence belongs to the THF1 family.

May be involved in photosynthetic membrane biogenesis. This Synechococcus sp. (strain CC9902) protein is Protein Thf1.